Here is a 357-residue protein sequence, read N- to C-terminus: Serine/threonine-protein kinase nekl-2 (357 aa).

The region spanning 4–267 is the Protein kinase domain; it reads YEKVRVVGRG…VSQLLSDPLV (264 aa). ATP-binding positions include 10–18 and lysine 35; that span reads VGRGAFGVC. Aspartate 137 (proton acceptor) is an active-site residue. Basic and acidic residues predominate over residues 281–290; that stretch reads IEPPPTDKRK. The disordered stretch occupies residues 281-357; the sequence is IEPPPTDKRK…QSRSQVHSKY (77 aa). Composition is skewed to polar residues over residues 293–327 and 336–357; these read ASLS…QLTP and FFSS…HSKY.

The protein belongs to the protein kinase superfamily. NEK Ser/Thr protein kinase family. NIMA subfamily. The cofactor is Mg(2+). As to expression, expressed in hypodermal cells including in hyp7 syncytium but not in seam cells.

The protein resides in the cytoplasm. It carries out the reaction L-seryl-[protein] + ATP = O-phospho-L-seryl-[protein] + ADP + H(+). The catalysed reaction is L-threonyl-[protein] + ATP = O-phospho-L-threonyl-[protein] + ADP + H(+). Probable serine/threonine-protein kinase required for the completion of molting. May play a role in endocytosis in the hypodermis syncytium. This Caenorhabditis elegans protein is Serine/threonine-protein kinase nekl-2.